Reading from the N-terminus, the 106-residue chain is Starvation responsive small protein A (106 aa).

The chain crosses the membrane as a helical span at residues 15–32; the sequence is ILLVNAGLISAYGVRIIF.

The protein resides in the cell membrane. In terms of biological role, involved in starvation response and aggregation stage of the life cycle. May be involved in fruiting body morphogenesis and spore formation. This Dictyostelium discoideum (Social amoeba) protein is Starvation responsive small protein A.